The chain runs to 151 residues: Large ribosomal subunit protein bL9 (151 aa).

Belongs to the bacterial ribosomal protein bL9 family.

Functionally, binds to the 23S rRNA. The polypeptide is Large ribosomal subunit protein bL9 (Chlorobium phaeobacteroides (strain DSM 266 / SMG 266 / 2430)).